The primary structure comprises 418 residues: Tyrosine--tRNA ligase (418 aa).

Tyr34 contacts L-tyrosine. The 'HIGH' region signature appears at 39-48 (PTADSLHLGH). Tyr169 and Gln173 together coordinate L-tyrosine. The short motif at 229–233 (KFGKS) is the 'KMSKS' region element. An ATP-binding site is contributed by Lys232. Residues 352-418 (HNIVEILVAA…GKKKYAVLTY (67 aa)) form the S4 RNA-binding domain.

This sequence belongs to the class-I aminoacyl-tRNA synthetase family. TyrS type 1 subfamily. In terms of assembly, homodimer.

The protein resides in the cytoplasm. It catalyses the reaction tRNA(Tyr) + L-tyrosine + ATP = L-tyrosyl-tRNA(Tyr) + AMP + diphosphate + H(+). Functionally, catalyzes the attachment of tyrosine to tRNA(Tyr) in a two-step reaction: tyrosine is first activated by ATP to form Tyr-AMP and then transferred to the acceptor end of tRNA(Tyr). This chain is Tyrosine--tRNA ligase, found in Streptococcus pyogenes serotype M1.